Reading from the N-terminus, the 55-residue chain is Eclosion hormone (55 aa).

This sequence belongs to the insect eclosion hormone family.

The protein localises to the secreted. Functionally, neuropeptide that triggers the performance of ecdysis behaviors at the end of a molt. It triggers adult behavior patterns: larval, pupal and adult ecdysis, and plasticization during the molt. This Romalea microptera (Eastern lubber grasshopper) protein is Eclosion hormone.